A 474-amino-acid polypeptide reads, in one-letter code: ATP synthase subunit beta 2 (474 aa).

Residue 156–163 coordinates ATP; sequence GGAGVGKT.

This sequence belongs to the ATPase alpha/beta chains family. In terms of assembly, F-type ATPases have 2 components, CF(1) - the catalytic core - and CF(0) - the membrane proton channel. CF(1) has five subunits: alpha(3), beta(3), gamma(1), delta(1), epsilon(1). CF(0) has three main subunits: a(1), b(2) and c(9-12). The alpha and beta chains form an alternating ring which encloses part of the gamma chain. CF(1) is attached to CF(0) by a central stalk formed by the gamma and epsilon chains, while a peripheral stalk is formed by the delta and b chains.

Its subcellular location is the cell inner membrane. The catalysed reaction is ATP + H2O + 4 H(+)(in) = ADP + phosphate + 5 H(+)(out). Its function is as follows. Produces ATP from ADP in the presence of a proton gradient across the membrane. The catalytic sites are hosted primarily by the beta subunits. This Shewanella frigidimarina (strain NCIMB 400) protein is ATP synthase subunit beta 2.